A 197-amino-acid chain; its full sequence is UPF0319 protein VP0761 (197 aa).

Residues 1-20 (MKKTTTLLGICAILSAPAFA) form the signal peptide.

It belongs to the UPF0319 family.

The chain is UPF0319 protein VP0761 from Vibrio parahaemolyticus serotype O3:K6 (strain RIMD 2210633).